A 453-amino-acid polypeptide reads, in one-letter code: Aldehyde dehydrogenase, dimeric NADP-preferring (453 aa).

Ser2 bears the N-acetylserine mark. Position 178 is an N6-acetyllysine (Lys178). 188–193 (GSTAVG) contacts NAD(+). Lys194 is modified (N6-acetyllysine). Residues Glu210 and Cys244 contribute to the active site.

The protein belongs to the aldehyde dehydrogenase family. In terms of assembly, homodimer.

It is found in the cytoplasm. It carries out the reaction an aldehyde + NAD(+) + H2O = a carboxylate + NADH + 2 H(+). The enzyme catalyses octanal + NAD(+) + H2O = octanoate + NADH + 2 H(+). In terms of biological role, ALDHs play a major role in the detoxification of alcohol-derived acetaldehyde. They are involved in the metabolism of corticosteroids, biogenic amines, neurotransmitters, and lipid peroxidation. Oxidizes medium and long chain aldehydes into non-toxic fatty acids. Preferentially oxidizes aromatic aldehyde substrates. Comprises about 50 percent of corneal epithelial soluble proteins. May play a role in preventing corneal damage caused by ultraviolet light. The chain is Aldehyde dehydrogenase, dimeric NADP-preferring (Aldh3a1) from Rattus norvegicus (Rat).